The following is a 295-amino-acid chain: MEKKVGTDRVKRGMAQMQKGGVIMDVVNAEQAKIAEEAGAVAVMALERVPSDIRAAGGVARMADPRIVEEVMNAVSIPVMAKARIGHITEARVLEAMGVDYIDESEVLTPADDEFHLLKSDFTVPFVCGCRDIGEALRRIGEGAAMLRTKGEPGTGNIVEAVRHMRQVNGQIRQIAGMTDDELMVAAKNFGAPYELIKEIKTLGKLPVVNFAAGGVATPADAALMMELGADGVFVGSGIFKSDNPAKFASAIVQATTYYTDYELIGKLSKELGSPMKGIEMSRLNPEDRMQDRSI.

Asp-25 lines the D-ribose 5-phosphate pocket. The active-site Schiff-base intermediate with D-ribose 5-phosphate is Lys-82. A D-ribose 5-phosphate-binding site is contributed by Gly-154. Arg-166 is a binding site for D-glyceraldehyde 3-phosphate. D-ribose 5-phosphate contacts are provided by residues Gly-215 and 236–237; that span reads GS.

It belongs to the PdxS/SNZ family. As to quaternary structure, in the presence of PdxT, forms a dodecamer of heterodimers.

The catalysed reaction is aldehydo-D-ribose 5-phosphate + D-glyceraldehyde 3-phosphate + L-glutamine = pyridoxal 5'-phosphate + L-glutamate + phosphate + 3 H2O + H(+). It participates in cofactor biosynthesis; pyridoxal 5'-phosphate biosynthesis. Catalyzes the formation of pyridoxal 5'-phosphate from ribose 5-phosphate (RBP), glyceraldehyde 3-phosphate (G3P) and ammonia. The ammonia is provided by the PdxT subunit. Can also use ribulose 5-phosphate and dihydroxyacetone phosphate as substrates, resulting from enzyme-catalyzed isomerization of RBP and G3P, respectively. This Listeria monocytogenes serotype 4b (strain CLIP80459) protein is Pyridoxal 5'-phosphate synthase subunit PdxS.